The sequence spans 392 residues: Formate-dependent phosphoribosylglycinamide formyltransferase (392 aa).

Residues 22–23 (EL) and E82 contribute to the N(1)-(5-phospho-beta-D-ribosyl)glycinamide site. ATP contacts are provided by residues R114, K155, 160-165 (SSGKGQ), 195-198 (EGVV), and E203. Positions 119 to 308 (RLAAEELWVP…EFALHVRAFL (190 aa)) constitute an ATP-grasp domain. Residues E267 and E279 each coordinate Mg(2+). Residues D286, K355, and 362-363 (RR) each bind N(1)-(5-phospho-beta-D-ribosyl)glycinamide.

The protein belongs to the PurK/PurT family. Homodimer.

It carries out the reaction N(1)-(5-phospho-beta-D-ribosyl)glycinamide + formate + ATP = N(2)-formyl-N(1)-(5-phospho-beta-D-ribosyl)glycinamide + ADP + phosphate + H(+). It participates in purine metabolism; IMP biosynthesis via de novo pathway; N(2)-formyl-N(1)-(5-phospho-D-ribosyl)glycinamide from N(1)-(5-phospho-D-ribosyl)glycinamide (formate route): step 1/1. Functionally, involved in the de novo purine biosynthesis. Catalyzes the transfer of formate to 5-phospho-ribosyl-glycinamide (GAR), producing 5-phospho-ribosyl-N-formylglycinamide (FGAR). Formate is provided by PurU via hydrolysis of 10-formyl-tetrahydrofolate. This is Formate-dependent phosphoribosylglycinamide formyltransferase from Erwinia tasmaniensis (strain DSM 17950 / CFBP 7177 / CIP 109463 / NCPPB 4357 / Et1/99).